A 145-amino-acid chain; its full sequence is D-aminoacyl-tRNA deacylase (145 aa).

Positions 137–138 (GP) match the Gly-cisPro motif, important for rejection of L-amino acids motif.

It belongs to the DTD family. As to quaternary structure, homodimer.

It localises to the cytoplasm. It catalyses the reaction glycyl-tRNA(Ala) + H2O = tRNA(Ala) + glycine + H(+). The enzyme catalyses a D-aminoacyl-tRNA + H2O = a tRNA + a D-alpha-amino acid + H(+). In terms of biological role, an aminoacyl-tRNA editing enzyme that deacylates mischarged D-aminoacyl-tRNAs. Also deacylates mischarged glycyl-tRNA(Ala), protecting cells against glycine mischarging by AlaRS. Acts via tRNA-based rather than protein-based catalysis; rejects L-amino acids rather than detecting D-amino acids in the active site. By recycling D-aminoacyl-tRNA to D-amino acids and free tRNA molecules, this enzyme counteracts the toxicity associated with the formation of D-aminoacyl-tRNA entities in vivo and helps enforce protein L-homochirality. The polypeptide is D-aminoacyl-tRNA deacylase (Pseudomonas putida (strain ATCC 47054 / DSM 6125 / CFBP 8728 / NCIMB 11950 / KT2440)).